A 218-amino-acid chain; its full sequence is uncharacterized protein (218 aa).

Polar residues-rich tracts occupy residues 1-21 (MSSQQQESEASGYNTSASSEF) and 68-102 (LNTSNDSNLVRNTARSPDSSMNGRPQTRRSTSSDI). Disordered regions lie at residues 1 to 39 (MSSQQQESEASGYNTSASSEFGSLEDSHQFVSPVTRHAS), 63 to 116 (EKRL…STSG), and 170 to 205 (GAKRKMATPSQSLKRQEKQSPLESRHGGLRSRGTPQ). The segment covering 183–195 (KRQEKQSPLESRH) has biased composition (basic and acidic residues).

This is an uncharacterized protein from Caenorhabditis elegans.